The following is a 370-amino-acid chain: Cytochrome b (370 aa).

The next 4 helical transmembrane spans lie at 30-50 (FGSMLGMVLVFQIVTGTFLAF), 74-96 (WIFRIFHFNGASLFFIFLYLHIF), 109-129 (VWMSGLTIYLLVMMEAFMGYV), and 175-195 (FFVLHFLLPWAILFIVLGHLI). Heme b contacts are provided by His80 and His94. Residues His179 and His193 each coordinate heme b. His198 serves as a coordination point for a ubiquinone. The next 4 membrane-spanning stretches (helical) occupy residues 221–240 (YIGKDAYNIVVWLVFIVLSL), 284–304 (VLGVIALLMSIVTFYFFALVN), 316–336 (FLVFLFIISSVILSWLGQCMV), and 342–362 (VLSPLFSVIYFGLAYLLLGIF).

This sequence belongs to the cytochrome b family. As to quaternary structure, the main subunits of complex b-c1 are: cytochrome b, cytochrome c1 and the Rieske protein. Heme b serves as cofactor.

The protein localises to the mitochondrion inner membrane. In terms of biological role, component of the ubiquinol-cytochrome c reductase complex (complex III or cytochrome b-c1 complex) that is part of the mitochondrial respiratory chain. The b-c1 complex mediates electron transfer from ubiquinol to cytochrome c. Contributes to the generation of a proton gradient across the mitochondrial membrane that is then used for ATP synthesis. The sequence is that of Cytochrome b (ctb-1) from Caenorhabditis briggsae.